The following is a 188-amino-acid chain: Adenine phosphoribosyltransferase (188 aa).

The protein belongs to the purine/pyrimidine phosphoribosyltransferase family. Homodimer.

It is found in the cytoplasm. The enzyme catalyses AMP + diphosphate = 5-phospho-alpha-D-ribose 1-diphosphate + adenine. The protein operates within purine metabolism; AMP biosynthesis via salvage pathway; AMP from adenine: step 1/1. Catalyzes a salvage reaction resulting in the formation of AMP, that is energically less costly than de novo synthesis. This is Adenine phosphoribosyltransferase from Salinispora tropica (strain ATCC BAA-916 / DSM 44818 / JCM 13857 / NBRC 105044 / CNB-440).